The following is a 419-amino-acid chain: eIF5-mimic protein 1 (419 aa).

The segment at 1-22 (MNKHQKPVLTGQRFKTRKRDEK) is disordered. At lysine 117 the chain carries N6-acetyllysine. The region spanning 248–415 (VQQSLGTRKE…QNAEEESESE (168 aa)) is the W2 domain. A phosphoserine mark is found at serine 412 and serine 414.

Belongs to the BZW family. Interacts with EIF3E, EIF2S2 and EIF3C.

Its subcellular location is the cytoplasm. Functionally, translation initiation regulator which represses non-AUG initiated translation and repeat-associated non-AUG (RAN) initiated translation by acting as a competitive inhibitor of eukaryotic translation initiation factor 5 (EIF5) function. Increases the accuracy of translation initiation by impeding EIF5-dependent translation from non-AUG codons by competing with it for interaction with EIF2S2 within the 43S pre-initiation complex (PIC) in an EIF3C-binding dependent manner. This is eIF5-mimic protein 1 (BZW2) from Macaca fascicularis (Crab-eating macaque).